A 1032-amino-acid chain; its full sequence is Protein transport protein Sec24D (1032 aa).

Positions 1–260 (MSQQGYVATP…GPPQPQKKLD (260 aa)) are disordered. A compositionally biased stretch (polar residues) spans 102–133 (PSAQSSYPGPISTSSVTQLGSQLSAMQINSYG). Over residues 198-212 (GPPPPNAQYQPPPLP) the composition is skewed to pro residues. At Ser-266 the chain carries Phosphoserine. Residues Cys-363, Cys-366, Cys-385, and Cys-388 each coordinate Zn(2+). The zinc finger-like stretch occupies residues 363–388 (CNRCKAYMCPFMQFIEGGRRYQCGFC). The Gelsolin-like repeat unit spans residues 901 to 974 (MLPAAVRCSE…PYSQQLRMIM (74 aa)).

It belongs to the SEC23/SEC24 family. SEC24 subfamily. As to quaternary structure, COPII is composed of at least five proteins: the Sec23/24 complex, the Sec13/31 complex and Sar1. Interacts with TMED2 and TMED10. Interacts with CNIH4. Interacts with GOSR2 (via IxM motif) and STX5 (via IxM motif); recruits GOSR2 and STX5 into COPII-coated vesicles. Interacts with KCNA3; this interaction is reduced in the presence of KCNE4. In terms of tissue distribution, ubiquitously expressed, with higher amounts in placenta, pancreas, heart and liver.

It is found in the cytoplasmic vesicle. It localises to the COPII-coated vesicle membrane. Its subcellular location is the endoplasmic reticulum membrane. The protein resides in the cytoplasm. The protein localises to the cytosol. Component of the coat protein complex II (COPII) which promotes the formation of transport vesicles from the endoplasmic reticulum (ER). The coat has two main functions, the physical deformation of the endoplasmic reticulum membrane into vesicles and the selection of cargo molecules for their transport to the Golgi complex. Plays a central role in cargo selection within the COPII complex and together with SEC24C may have a different specificity compared to SEC24A and SEC24B. May more specifically package GPI-anchored proteins through the cargo receptor TMED10. May also be specific for IxM motif-containing cargos like the SNAREs GOSR2 and STX5. The polypeptide is Protein transport protein Sec24D (Homo sapiens (Human)).